We begin with the raw amino-acid sequence, 80 residues long: UPF0270 protein ASA_3305 (80 aa).

Belongs to the UPF0270 family.

This chain is UPF0270 protein ASA_3305, found in Aeromonas salmonicida (strain A449).